The primary structure comprises 570 residues: PTS system lactose-specific EIICB component (570 aa).

Residues 9–410 enclose the PTS EIIC type-3 domain; the sequence is IEKGKPFFEK…VVDIIIYYPF (402 aa). The next 9 helical transmembrane spans lie at 31 to 51, 65 to 85, 104 to 124, 133 to 153, 178 to 198, 223 to 243, 283 to 303, 340 to 360, and 382 to 402; these read GFISAMPVILFSSIFLLIAYV, AILMKPYNYTMGLVAFLVAGT, INFISTMQAAMCGFLFLASDP, AFMGTKGLLTAFLSAFVTVIV, FKDLIPFSAVIIILYALDLVI, GWIGVTIIFGAFALFWFVGIH, MFIVTFGGTGATLVVPFMFMW, VFFIPFVLAPIVNVWIFKLFV, and IIMGTGFGLWSFVLAITLIVV. The 104-residue stretch at 467–570 folds into the PTS EIIB type-3 domain; that stretch reads QTNVLVLCAG…LDFVQQQFEN (104 aa). The active-site Phosphocysteine intermediate; for EIIB activity is the cysteine 474. Phosphocysteine; by EIIA is present on cysteine 474.

It is found in the cell membrane. The catalysed reaction is lactose(out) + N(pros)-phospho-L-histidyl-[protein] = lactose 6-phosphate(in) + L-histidyl-[protein]. Its function is as follows. The phosphoenolpyruvate-dependent sugar phosphotransferase system (sugar PTS), a major carbohydrate active transport system, catalyzes the phosphorylation of incoming sugar substrates concomitantly with their translocation across the cell membrane. The enzyme II LacEF PTS system is involved in lactose transport, but can also use galactose, isopropyl beta-thio-galactopyranoside and thiomethyl beta-D-galactopyranoside (TMG) as substrates. This Staphylococcus aureus protein is PTS system lactose-specific EIICB component.